The primary structure comprises 194 residues: Flagellin A2 (194 aa).

A propeptide spanning residues 1–12 is cleaved from the precursor; it reads MFEFITDEDERG.

The protein belongs to the archaeal flagellin family. Post-translationally, glycosylated.

The protein localises to the archaeal flagellum. In terms of biological role, flagellin is the subunit protein which polymerizes to form the filaments of archaeal flagella. This chain is Flagellin A2 (flaA2), found in Halobacterium salinarum (strain ATCC 700922 / JCM 11081 / NRC-1) (Halobacterium halobium).